The chain runs to 125 residues: UPF0231 protein in hemN 3'region (125 aa).

This sequence belongs to the UPF0231 family.

The protein is UPF0231 protein in hemN 3'region of Mannheimia haemolytica (Pasteurella haemolytica).